A 131-amino-acid chain; its full sequence is Single-stranded DNA-binding protein 2 (131 aa).

In terms of domain architecture, SSB spans 1–103 (MYNKVIMIGR…VLASSFQLLE (103 aa)). The Important for interaction with partner proteins signature appears at 126-131 (EEELPF).

In terms of assembly, homotetramer.

Plays an important role in DNA replication, recombination and repair. Binds to ssDNA and to an array of partner proteins to recruit them to their sites of action during DNA metabolism. This Streptococcus agalactiae serotype V (strain ATCC BAA-611 / 2603 V/R) protein is Single-stranded DNA-binding protein 2 (ssb2).